We begin with the raw amino-acid sequence, 380 residues long: Peptide chain release factor 1-like, mitochondrial (380 aa).

The transit peptide at 1-26 (MRSRVLWGAARWLWPRRAVGPARRPL) directs the protein to the mitochondrion. A coiled-coil region spans residues 63-117 (ELLAVIKLLNEKERELRETEHLLHDENEDLRKLAENEITLCQKEITQLKHQIILL). The tract at residues 236–300 (PKDLRIDTKR…LRAKLYSMHL (65 aa)) is GGQ domain. Residues 250 to 252 (GGQ) carry the GGQ motif. The residue at position 252 (Gln252) is an N5-methylglutamine.

It belongs to the prokaryotic/mitochondrial release factor family. In terms of processing, methylation of glutamine in the GGQ triplet by HEMK1 is conserved from bacteria to mammals. Expressed in skeletal muscle (at protein level).

It is found in the mitochondrion. Its function is as follows. Mitochondrial peptide chain release factor that directs the termination of translation in response to the peptide chain termination codons UAA and UAG. In Homo sapiens (Human), this protein is Peptide chain release factor 1-like, mitochondrial.